We begin with the raw amino-acid sequence, 396 residues long: Elongation factor Tu (396 aa).

Residues 10–206 enclose the tr-type G domain; sequence KPHVNVGTIG…ALDSYIPTPE (197 aa). Residues 19 to 26 are G1; sequence GHVDHGKT. 19 to 26 is a binding site for GTP; that stretch reads GHVDHGKT. Threonine 26 lines the Mg(2+) pocket. Residues 60 to 64 form a G2 region; the sequence is GITIN. Residues 81–84 are G3; sequence DCPG. GTP contacts are provided by residues 81–85 and 136–139; these read DCPGH and NKCD. The tract at residues 136-139 is G4; it reads NKCD. The G5 stretch occupies residues 174–176; it reads SAK.

This sequence belongs to the TRAFAC class translation factor GTPase superfamily. Classic translation factor GTPase family. EF-Tu/EF-1A subfamily. In terms of assembly, monomer.

It localises to the cytoplasm. The catalysed reaction is GTP + H2O = GDP + phosphate + H(+). Its function is as follows. GTP hydrolase that promotes the GTP-dependent binding of aminoacyl-tRNA to the A-site of ribosomes during protein biosynthesis. In Ralstonia nicotianae (strain ATCC BAA-1114 / GMI1000) (Ralstonia solanacearum), this protein is Elongation factor Tu.